We begin with the raw amino-acid sequence, 227 residues long: Cytochrome c oxidase subunit 2 (227 aa).

At 1–26 the chain is on the mitochondrial intermembrane side; that stretch reads MATWSNLSIQDGASPLMEQLSFFHDD. The chain crosses the membrane as a helical span at residues 27–48; sequence HTMVVLLITVIVGYALSYMLFN. Residues 49-62 lie on the Mitochondrial matrix side of the membrane; the sequence is AYTNRNMLHGHLIE. The helical transmembrane segment at 63–82 threads the bilayer; that stretch reads TIWTALPAITLIFIALPSLR. The Mitochondrial intermembrane portion of the chain corresponds to 83–227; sequence LLYLLDDSVD…LFIKWLSKMI (145 aa). The Cu cation site is built by His161, Cys196, Glu198, Cys200, His204, and Met207. Glu198 contributes to the Mg(2+) binding site.

The protein belongs to the cytochrome c oxidase subunit 2 family. As to quaternary structure, component of the cytochrome c oxidase (complex IV, CIV), a multisubunit enzyme composed of a catalytic core of 3 subunits and several supernumerary subunits. The complex exists as a monomer or a dimer and forms supercomplexes (SCs) in the inner mitochondrial membrane with ubiquinol-cytochrome c oxidoreductase (cytochrome b-c1 complex, complex III, CIII). It depends on Cu cation as a cofactor.

The protein localises to the mitochondrion inner membrane. It carries out the reaction 4 Fe(II)-[cytochrome c] + O2 + 8 H(+)(in) = 4 Fe(III)-[cytochrome c] + 2 H2O + 4 H(+)(out). Component of the cytochrome c oxidase, the last enzyme in the mitochondrial electron transport chain which drives oxidative phosphorylation. The respiratory chain contains 3 multisubunit complexes succinate dehydrogenase (complex II, CII), ubiquinol-cytochrome c oxidoreductase (cytochrome b-c1 complex, complex III, CIII) and cytochrome c oxidase (complex IV, CIV), that cooperate to transfer electrons derived from NADH and succinate to molecular oxygen, creating an electrochemical gradient over the inner membrane that drives transmembrane transport and the ATP synthase. Cytochrome c oxidase is the component of the respiratory chain that catalyzes the reduction of oxygen to water. Electrons originating from reduced cytochrome c in the intermembrane space (IMS) are transferred via the dinuclear copper A center (CU(A)) of subunit 2 and heme A of subunit 1 to the active site in subunit 1, a binuclear center (BNC) formed by heme A3 and copper B (CU(B)). The BNC reduces molecular oxygen to 2 water molecules using 4 electrons from cytochrome c in the IMS and 4 protons from the mitochondrial matrix. This is Cytochrome c oxidase subunit 2 (COII) from Schistocerca gregaria (Desert locust).